A 503-amino-acid chain; its full sequence is ATP synthase subunit alpha (503 aa).

170-177 (GDKQTGKT) provides a ligand contact to ATP.

It belongs to the ATPase alpha/beta chains family. In terms of assembly, F-type ATPases have 2 components, CF(1) - the catalytic core - and CF(0) - the membrane proton channel. CF(1) has five subunits: alpha(3), beta(3), gamma(1), delta(1), epsilon(1). CF(0) has three main subunits: a(1), b(2) and c(9-12). The alpha and beta chains form an alternating ring which encloses part of the gamma chain. CF(1) is attached to CF(0) by a central stalk formed by the gamma and epsilon chains, while a peripheral stalk is formed by the delta and b chains.

The protein localises to the cell inner membrane. The enzyme catalyses ATP + H2O + 4 H(+)(in) = ADP + phosphate + 5 H(+)(out). Its function is as follows. Produces ATP from ADP in the presence of a proton gradient across the membrane. The alpha chain is a regulatory subunit. This Helicobacter pylori (strain HPAG1) protein is ATP synthase subunit alpha.